Consider the following 186-residue polypeptide: Guanylate kinase (186 aa).

In terms of domain architecture, Guanylate kinase-like spans 5–183 (GNLTVLTGPS…AFKEIEGFMG (179 aa)). An ATP-binding site is contributed by 12–19 (GPSGVGKG).

This sequence belongs to the guanylate kinase family.

It localises to the cytoplasm. The catalysed reaction is GMP + ATP = GDP + ADP. Its function is as follows. Essential for recycling GMP and indirectly, cGMP. The polypeptide is Guanylate kinase (Prochlorococcus marinus (strain NATL2A)).